Reading from the N-terminus, the 132-residue chain is MDVTRLLLATLLVFLCFFTAYSHPPPEEKLRDDRSLRSNSSVNLLDFPSVSIVALNKNSKQISRKEAEKKRSSKKEASMKKVARPRTPLSAPCVTTRDSCKPPAPACCDPCASCQCRFFRSACSCRVLSLNC.

The first 22 residues, 1–22 (MDVTRLLLATLLVFLCFFTAYS), serve as a signal peptide directing secretion. N-linked (GlcNAc...) asparagine glycosylation is present at N39. Positions 61–87 (QISRKEAEKKRSSKKEASMKKVARPRT) are disordered. A compositionally biased stretch (basic and acidic residues) spans 63–79 (SRKEAEKKRSSKKEASM). Disulfide bonds link C93–C108, C100–C114, C107–C125, C111–C132, and C116–C123. The Agouti domain occupies 93–132 (CVTTRDSCKPPAPACCDPCASCQCRFFRSACSCRVLSLNC).

It is found in the secreted. Its function is as follows. Involved in the regulation of melanogenesis. The binding of ASP to MC1R precludes alpha-MSH initiated signaling and thus blocks production of cAMP, leading to a down-regulation of eumelanogenesis (brown/black pigment) and thus increasing synthesis of pheomelanin (yellow/red pigment). The sequence is that of Agouti-signaling protein (ASIP) from Macaca silenus (Lion-tailed macaque).